Reading from the N-terminus, the 146-residue chain is Ribonuclease H (146 aa).

The 143-residue stretch at 1–143 (MQKKVTIYTD…CDYLATQAIK (143 aa)) folds into the RNase H type-1 domain. 4 residues coordinate Mg(2+): aspartate 10, glutamate 48, aspartate 70, and aspartate 135.

Belongs to the RNase H family. Monomer. The cofactor is Mg(2+).

It is found in the cytoplasm. It catalyses the reaction Endonucleolytic cleavage to 5'-phosphomonoester.. In terms of biological role, endonuclease that specifically degrades the RNA of RNA-DNA hybrids. This chain is Ribonuclease H, found in Chlorobium phaeobacteroides (strain BS1).